The primary structure comprises 513 residues: Microtubule-associated protein 70-5 (513 aa).

Disordered regions lie at residues methionine 1–lysine 20, lysine 60–glutamate 81, phenylalanine 347–threonine 367, and alanine 393–asparagine 413. Residues valine 9 to glutamine 18 show a composition bias toward polar residues. The stretch at serine 10–aspartate 322 forms a coiled coil. The segment covering lysine 60–glutamate 80 has biased composition (basic and acidic residues). The required for targeting to microtubules stretch occupies residues phenylalanine 190 to histidine 400. Residues aspartate 426–lysine 501 are a coiled coil.

It belongs to the MAP70 family. Interacts with MAP70.1 and itself.

Its subcellular location is the cytoplasm. The protein localises to the cytoskeleton. Functionally, plant-specific protein that interact with microtubules and regulates microtubule dynamics. May play a role in anisotropic cell expansion and organ growth. In association with MAP70.1, is essential for the normal banding pattern of secondary cell wall and for the proper development of xylem tracheary elements and wood formation. The polypeptide is Microtubule-associated protein 70-5 (MAP70.5) (Arabidopsis thaliana (Mouse-ear cress)).